Here is a 288-residue protein sequence, read N- to C-terminus: ATP synthase gamma chain (288 aa).

The protein belongs to the ATPase gamma chain family. In terms of assembly, F-type ATPases have 2 components, CF(1) - the catalytic core - and CF(0) - the membrane proton channel. CF(1) has five subunits: alpha(3), beta(3), gamma(1), delta(1), epsilon(1). CF(0) has three main subunits: a, b and c.

The protein localises to the cell inner membrane. Functionally, produces ATP from ADP in the presence of a proton gradient across the membrane. The gamma chain is believed to be important in regulating ATPase activity and the flow of protons through the CF(0) complex. The sequence is that of ATP synthase gamma chain from Acidithiobacillus ferrooxidans (strain ATCC 23270 / DSM 14882 / CIP 104768 / NCIMB 8455) (Ferrobacillus ferrooxidans (strain ATCC 23270)).